The chain runs to 321 residues: Lipoyl synthase (321 aa).

Residues C68, C73, C79, C94, C98, C101, and S308 each coordinate [4Fe-4S] cluster. Residues 80-297 (FNHGTATFMI…KALADELGFT (218 aa)) form the Radical SAM core domain.

It belongs to the radical SAM superfamily. Lipoyl synthase family. [4Fe-4S] cluster is required as a cofactor.

It is found in the cytoplasm. It carries out the reaction [[Fe-S] cluster scaffold protein carrying a second [4Fe-4S](2+) cluster] + N(6)-octanoyl-L-lysyl-[protein] + 2 oxidized [2Fe-2S]-[ferredoxin] + 2 S-adenosyl-L-methionine + 4 H(+) = [[Fe-S] cluster scaffold protein] + N(6)-[(R)-dihydrolipoyl]-L-lysyl-[protein] + 4 Fe(3+) + 2 hydrogen sulfide + 2 5'-deoxyadenosine + 2 L-methionine + 2 reduced [2Fe-2S]-[ferredoxin]. It functions in the pathway protein modification; protein lipoylation via endogenous pathway; protein N(6)-(lipoyl)lysine from octanoyl-[acyl-carrier-protein]: step 2/2. In terms of biological role, catalyzes the radical-mediated insertion of two sulfur atoms into the C-6 and C-8 positions of the octanoyl moiety bound to the lipoyl domains of lipoate-dependent enzymes, thereby converting the octanoylated domains into lipoylated derivatives. This chain is Lipoyl synthase, found in Shewanella putrefaciens (strain CN-32 / ATCC BAA-453).